Reading from the N-terminus, the 290-residue chain is 4-hydroxy-tetrahydrodipicolinate synthase (290 aa).

Thr-44 provides a ligand contact to pyruvate. The active-site Proton donor/acceptor is the Tyr-132. The active-site Schiff-base intermediate with substrate is Lys-160. Residue Ile-202 coordinates pyruvate.

It belongs to the DapA family. Homotetramer; dimer of dimers.

The protein localises to the cytoplasm. It catalyses the reaction L-aspartate 4-semialdehyde + pyruvate = (2S,4S)-4-hydroxy-2,3,4,5-tetrahydrodipicolinate + H2O + H(+). It functions in the pathway amino-acid biosynthesis; L-lysine biosynthesis via DAP pathway; (S)-tetrahydrodipicolinate from L-aspartate: step 3/4. Catalyzes the condensation of (S)-aspartate-beta-semialdehyde [(S)-ASA] and pyruvate to 4-hydroxy-tetrahydrodipicolinate (HTPA). This is 4-hydroxy-tetrahydrodipicolinate synthase from Legionella pneumophila (strain Corby).